Here is a 639-residue protein sequence, read N- to C-terminus: C-type lectin domain-containing protein 160 (639 aa).

A signal peptide spans 1–19 (MDLKSWILLSCTLLPLSVT). 2 consecutive VWFA domains span residues 31 to 178 (DIII…VGIG) and 289 to 474 (DIIF…LCQV). The 128-residue stretch at 491-618 (KYGECFFPTK…WNSVSCTSEY (128 aa)) folds into the C-type lectin domain. Residues Cys-594 and Cys-614 are joined by a disulfide bond.

It localises to the secreted. This chain is C-type lectin domain-containing protein 160 (clec-160), found in Caenorhabditis elegans.